The sequence spans 394 residues: Protein TsgA homolog (394 aa).

12 helical membrane-spanning segments follow: residues 11 to 31, 51 to 71, 76 to 96, 101 to 121, 134 to 154, 162 to 182, 206 to 226, 246 to 266, 274 to 294, 302 to 322, 334 to 354, and 363 to 383; these read WISYLSYALTGALVIVTGIVM, FLNAGILISIFLNAWLMEIIP, LVFGFILMLIAIAGLMVGHNL, ISMFIFGVVSGITMSIGTFLV, LLFTDSFFSMAGMIFPIAAAM, WYWVYACIGLLYVGIFVLTLC, VGVLFLAIAALCYILGQLGFI, QLVSNFWISYMIGMWIFSFIL, IVTVLAAMATLAMYLFVSTDN, ILALGFVSSAIYTTLITLGSL, FILTCGTVGTMLTFVVTGPIV, and LATANGLYLAVFILCLALGFF.

The protein belongs to the major facilitator superfamily. TsgA family.

Its subcellular location is the cell inner membrane. The chain is Protein TsgA homolog from Yersinia pseudotuberculosis serotype O:1b (strain IP 31758).